Consider the following 336-residue polypeptide: Anthranilate phosphoribosyltransferase (336 aa).

5-phospho-alpha-D-ribose 1-diphosphate-binding positions include Gly-82, 85 to 86, Thr-90, 92 to 95, 110 to 118, and Ser-122; these read GD, NVST, and KHGNRSVSS. Gly-82 contributes to the anthranilate binding site. Residue Ser-94 coordinates Mg(2+). Asn-113 contributes to the anthranilate binding site. An anthranilate-binding site is contributed by Arg-168. Mg(2+)-binding residues include Asp-227 and Glu-228.

This sequence belongs to the anthranilate phosphoribosyltransferase family. As to quaternary structure, homodimer. Mg(2+) serves as cofactor.

The enzyme catalyses N-(5-phospho-beta-D-ribosyl)anthranilate + diphosphate = 5-phospho-alpha-D-ribose 1-diphosphate + anthranilate. It participates in amino-acid biosynthesis; L-tryptophan biosynthesis; L-tryptophan from chorismate: step 2/5. In terms of biological role, catalyzes the transfer of the phosphoribosyl group of 5-phosphorylribose-1-pyrophosphate (PRPP) to anthranilate to yield N-(5'-phosphoribosyl)-anthranilate (PRA). This Leptospira borgpetersenii serovar Hardjo-bovis (strain JB197) protein is Anthranilate phosphoribosyltransferase.